The primary structure comprises 91 residues: MKLPFIFLITLLIFVSSCTSILINESSDEERTYSFSPTTSPFDPRSLNQELKIGRIGYCFDCARACMRRGKYIRTCSFERKLCRCSISGIK.

The signal sequence occupies residues Met1 to Ser20. An N-linked (GlcNAc...) asparagine glycan is attached at Asn24. 3 disulfides stabilise this stretch: Cys59-Cys76, Cys62-Cys83, and Cys66-Cys85. Positions Arg68–Ser88 are PRK6 binding.

Belongs to the DEFL family. In terms of assembly, binds to PRK6 LRRs. In terms of tissue distribution, expressed in the pistil. Detected exclusively in the synergid cells.

The protein localises to the secreted. In terms of biological role, pollen tube attractants guiding pollen tubes to the ovular micropyle. Attracts pollen tubes from both A.thaliana and A.lyrata. The chain is Protein LURE 1.3 from Arabidopsis thaliana (Mouse-ear cress).